The chain runs to 199 residues: Elongation factor Ts (199 aa).

Residues 81–84 (TDFV) form an involved in Mg(2+) ion dislocation from EF-Tu region.

The protein belongs to the EF-Ts family.

It localises to the cytoplasm. Associates with the EF-Tu.GDP complex and induces the exchange of GDP to GTP. It remains bound to the aminoacyl-tRNA.EF-Tu.GTP complex up to the GTP hydrolysis stage on the ribosome. The chain is Elongation factor Ts from Thermotoga sp. (strain RQ2).